The primary structure comprises 421 residues: TITAN-like protein (421 aa).

A C2H2-type 1; degenerate zinc finger spans residues 11–32 (EFCTVCRFHHDQGSRHKYFPRH). A C2H2-type 2; degenerate zinc finger spans residues 70–100 (VWCVFCDEDIVELGSSFACSKAINHFASSDH). Residues 279-306 (ISSSHSTDAGGNVHSGAPPPWLDANDGD) form a disordered region. Short sequence motifs (nuclear localization signal) lie at residues 328–335 (NRKLNPNR) and 377–384 (TRKESRKE). Residues 376 to 421 (GTRKESRKEFEKEKRKLVKTESISTESEPVKIQPYISKRARRESGE) form a disordered region. Residues 377–389 (TRKESRKEFEKEK) show a composition bias toward basic and acidic residues.

In terms of tissue distribution, also present in cotyledons, hypocotyls, stems, veins of sepals and stigmas, and actively dividing tissues such as shoot apical meristem, root tips and emerging true leaves. Weak expression in petals and anthers, and not detected in mature leaves. In seeds, expressed in both the endosperm and embryo.

The protein localises to the nucleus. Functionally, key regulator for endosperm and embryo nuclear divisions. The polypeptide is TITAN-like protein (Arabidopsis thaliana (Mouse-ear cress)).